The following is a 378-amino-acid chain: Erythronate-4-phosphate dehydrogenase (378 aa).

Residues serine 45 and threonine 66 each contribute to the substrate site. NAD(+) contacts are provided by aspartate 146 and threonine 175. Arginine 208 is a catalytic residue. Residue aspartate 232 coordinates NAD(+). Glutamate 237 is a catalytic residue. The Proton donor role is filled by histidine 254. Glycine 257 serves as a coordination point for NAD(+). Residue tyrosine 258 coordinates substrate.

Belongs to the D-isomer specific 2-hydroxyacid dehydrogenase family. PdxB subfamily. In terms of assembly, homodimer.

The protein localises to the cytoplasm. It carries out the reaction 4-phospho-D-erythronate + NAD(+) = (R)-3-hydroxy-2-oxo-4-phosphooxybutanoate + NADH + H(+). It participates in cofactor biosynthesis; pyridoxine 5'-phosphate biosynthesis; pyridoxine 5'-phosphate from D-erythrose 4-phosphate: step 2/5. Catalyzes the oxidation of erythronate-4-phosphate to 3-hydroxy-2-oxo-4-phosphonooxybutanoate. In Escherichia coli O81 (strain ED1a), this protein is Erythronate-4-phosphate dehydrogenase.